The chain runs to 348 residues: D-alanine--D-alanine ligase (348 aa).

Positions 132 to 334 (KRILEVAGVP…YSDLIKELVV (203 aa)) constitute an ATP-grasp domain. Residue 162–217 (LEKLTFPVFVKPANMGSSVGISKAENESELRSAIDLALKYDSRILIEQGVVAREIE) coordinates ATP. Mg(2+)-binding residues include Asp-288, Glu-301, and Asn-303.

Belongs to the D-alanine--D-alanine ligase family. It depends on Mg(2+) as a cofactor. Mn(2+) is required as a cofactor.

The protein localises to the cytoplasm. It catalyses the reaction 2 D-alanine + ATP = D-alanyl-D-alanine + ADP + phosphate + H(+). It functions in the pathway cell wall biogenesis; peptidoglycan biosynthesis. Cell wall formation. This chain is D-alanine--D-alanine ligase, found in Streptococcus thermophilus (strain ATCC BAA-491 / LMD-9).